The following is a 57-amino-acid chain: UPF0391 membrane protein Smed_4051 (57 aa).

The next 2 membrane-spanning stretches (helical) occupy residues 4–24 and 33–53; these read WALIFFVISLIAGFLGFSGIS and ILFYIAVIIFLVFLVLALAVG.

Belongs to the UPF0391 family.

Its subcellular location is the cell membrane. The chain is UPF0391 membrane protein Smed_4051 from Sinorhizobium medicae (strain WSM419) (Ensifer medicae).